A 205-amino-acid polypeptide reads, in one-letter code: Holliday junction branch migration complex subunit RuvA (205 aa).

The interval 1-64 is domain I; it reads MIGKLTGLVD…EDAIRLFGFP (64 aa). Residues 65 to 143 form a domain II region; the sequence is SEVERDWFRL…ALGPVDSLTA (79 aa). The flexible linker stretch occupies residues 144-153; the sequence is KLTIAEAEGT. The domain III stretch occupies residues 153–205; it reads TAPVAAQDAITALVNLGYGRPQAAAAVATSLEALGETAPLADLIRRGLKELAR.

The protein belongs to the RuvA family. Homotetramer. Forms an RuvA(8)-RuvB(12)-Holliday junction (HJ) complex. HJ DNA is sandwiched between 2 RuvA tetramers; dsDNA enters through RuvA and exits via RuvB. An RuvB hexamer assembles on each DNA strand where it exits the tetramer. Each RuvB hexamer is contacted by two RuvA subunits (via domain III) on 2 adjacent RuvB subunits; this complex drives branch migration. In the full resolvosome a probable DNA-RuvA(4)-RuvB(12)-RuvC(2) complex forms which resolves the HJ.

It localises to the cytoplasm. In terms of biological role, the RuvA-RuvB-RuvC complex processes Holliday junction (HJ) DNA during genetic recombination and DNA repair, while the RuvA-RuvB complex plays an important role in the rescue of blocked DNA replication forks via replication fork reversal (RFR). RuvA specifically binds to HJ cruciform DNA, conferring on it an open structure. The RuvB hexamer acts as an ATP-dependent pump, pulling dsDNA into and through the RuvAB complex. HJ branch migration allows RuvC to scan DNA until it finds its consensus sequence, where it cleaves and resolves the cruciform DNA. The chain is Holliday junction branch migration complex subunit RuvA from Beijerinckia indica subsp. indica (strain ATCC 9039 / DSM 1715 / NCIMB 8712).